A 172-amino-acid polypeptide reads, in one-letter code: Ribosome maturation factor RimM (172 aa).

Residues 95-168 (AEGEFYYHQI…RVDVEIMEGL (74 aa)) form the PRC barrel domain.

This sequence belongs to the RimM family. Binds ribosomal protein uS19.

The protein resides in the cytoplasm. An accessory protein needed during the final step in the assembly of 30S ribosomal subunit, possibly for assembly of the head region. Essential for efficient processing of 16S rRNA. May be needed both before and after RbfA during the maturation of 16S rRNA. It has affinity for free ribosomal 30S subunits but not for 70S ribosomes. In Streptococcus equi subsp. equi (strain 4047), this protein is Ribosome maturation factor RimM.